We begin with the raw amino-acid sequence, 151 residues long: UPF0178 protein CJA_1978 (151 aa).

It belongs to the UPF0178 family.

The polypeptide is UPF0178 protein CJA_1978 (Cellvibrio japonicus (strain Ueda107) (Pseudomonas fluorescens subsp. cellulosa)).